We begin with the raw amino-acid sequence, 338 residues long: Ketol-acid reductoisomerase (NADP(+)) (338 aa).

The region spanning Met1–Thr181 is the KARI N-terminal Rossmann domain. Residues Tyr24–Gln27, Arg47, and Ser52 contribute to the NADP(+) site. His107 is an active-site residue. Residue Gly133 coordinates NADP(+). The KARI C-terminal knotted domain maps to Asn182–Ile327. Mg(2+)-binding residues include Asp190, Glu194, Glu226, and Glu230. A substrate-binding site is contributed by Ser251.

The protein belongs to the ketol-acid reductoisomerase family. It depends on Mg(2+) as a cofactor.

The enzyme catalyses (2R)-2,3-dihydroxy-3-methylbutanoate + NADP(+) = (2S)-2-acetolactate + NADPH + H(+). It catalyses the reaction (2R,3R)-2,3-dihydroxy-3-methylpentanoate + NADP(+) = (S)-2-ethyl-2-hydroxy-3-oxobutanoate + NADPH + H(+). Its pathway is amino-acid biosynthesis; L-isoleucine biosynthesis; L-isoleucine from 2-oxobutanoate: step 2/4. It functions in the pathway amino-acid biosynthesis; L-valine biosynthesis; L-valine from pyruvate: step 2/4. In terms of biological role, involved in the biosynthesis of branched-chain amino acids (BCAA). Catalyzes an alkyl-migration followed by a ketol-acid reduction of (S)-2-acetolactate (S2AL) to yield (R)-2,3-dihydroxy-isovalerate. In the isomerase reaction, S2AL is rearranged via a Mg-dependent methyl migration to produce 3-hydroxy-3-methyl-2-ketobutyrate (HMKB). In the reductase reaction, this 2-ketoacid undergoes a metal-dependent reduction by NADPH to yield (R)-2,3-dihydroxy-isovalerate. The sequence is that of Ketol-acid reductoisomerase (NADP(+)) from Leptothrix cholodnii (strain ATCC 51168 / LMG 8142 / SP-6) (Leptothrix discophora (strain SP-6)).